The chain runs to 138 residues: Large ribosomal subunit protein uL16 (138 aa).

The span at 1 to 13 (MLQPKRRKYRKEQ) shows a compositional bias: basic residues. Residues 1-24 (MLQPKRRKYRKEQKGRNTGKATRG) form a disordered region.

Belongs to the universal ribosomal protein uL16 family. In terms of assembly, part of the 50S ribosomal subunit.

In terms of biological role, binds 23S rRNA and is also seen to make contacts with the A and possibly P site tRNAs. The polypeptide is Large ribosomal subunit protein uL16 (Burkholderia lata (strain ATCC 17760 / DSM 23089 / LMG 22485 / NCIMB 9086 / R18194 / 383)).